The sequence spans 557 residues: MTDNNKYRDVEIRAPRGNKLTAKSWLTEAPLRMLMNNLDPQVAENPKELVVYGGIGRAARNWACYDKIVETLTRLEDDETLLVQSGKPVGVFKTHSNAPRVLIANSNLVPHWANWEHFNELDAKGLAMYGQMTAGSWIYIGSQGIVQGTYETFVEAGRQHYGGSLKGKWVLTAGLGGMGGAQPLAATLAGACSLNIECQQSRIDFRLETRYVDEQAKDLDDALARIAKYTAEGKAISIALHGNAAEVLPELVKRGVRPDMVTDQTSAHDPLNGYLPVGWTWEQYRDRAQTEPAAVVKAAKQSMAVHVQAMLDFQKQGIPTFDYGNNIRQMAKEEGVANAFDFPGFVPAYIRPLFCRGVGPFRWAALSGEAEDIYKTDAKVKELIPDDAHLHRWLDMARERISFQGLPARICWVGLGLRAKLGLAFNEMVRSGELSAPIVIGRDHLDSGSVSSPNRETESMRDGSDAVSDWPLLNALLNTASGATWVSLHHGGGVGMGFSQHSGMVIVCDGTDEAAARIARVLTNDPGTGVMRHADAGYDIAVDCAKEQGLDLPMITG.

NAD(+) contacts are provided by residues 53–54 (GG), glutamine 131, 177–179 (GMG), glutamate 197, arginine 202, 243–244 (NA), 264–268 (QTSAH), 274–275 (YL), and tyrosine 323. The active site involves cysteine 411. The tract at residues 445 to 464 (LDSGSVSSPNRETESMRDGS) is disordered. Residues 455 to 464 (RETESMRDGS) show a composition bias toward basic and acidic residues. Glycine 493 is an NAD(+) binding site.

It belongs to the urocanase family. It depends on NAD(+) as a cofactor.

The protein resides in the cytoplasm. The enzyme catalyses 4-imidazolone-5-propanoate = trans-urocanate + H2O. It participates in amino-acid degradation; L-histidine degradation into L-glutamate; N-formimidoyl-L-glutamate from L-histidine: step 2/3. Catalyzes the conversion of urocanate to 4-imidazolone-5-propionate. This Pseudomonas putida (strain W619) protein is Urocanate hydratase.